The primary structure comprises 933 residues: MSSTILPTDPDVLPNRADDSAFIEEDTRLRNDIRLLGRILGDTVRDQEGSAVFDLVERIRQTSIRFHRDEDKPARRELEAILDDMSASDTVKIVRAFSYFSHLANIAEDQNNIRQMRAGSTAGSAPRAGMLAKTLAHAREEGIGARELREFFKTALVSPVLTAHPTEVRRKSTMDREMEVAALLDQRERLQLTADEWAQNEEQLRRAVVTLWKTNLLRRTKLTVLDEVANGLSFYDYTFLREVPRLHSALEDQLGGGEGGEAEEELASFLRMGSWIGGDRDGNPFVTAEVLQGTLRLQSARVLRFYLDELHELGSELSLASHLAPITEDVRLLAERSPDHSPHRRHEPYRLAVSGIYARLAATAAKLKIDSVRAPVGEAEIYANVQEFKADLDAIHYSLTKYNAGVIARGRLRQLRRAADCFGFHLASLDMRQNSAVHERTMGELMDAARPTSSYLALDEDERIALLTGELRSARPLTSIFIKYSDETVGELAVLHEAARAHSIYGEAAIPQCIISMTKGVSDLLEVAVLLKEVGLIDPSGRCAINIVPLFETIEDLQACAAIMDRLLAIPEYRRLVDSRGGVQEVMLGYSDSNKDGGFVTSGWELYKAEIGLLDVFEHHGVRLRLFHGRGGSVGRGGGPSYDAIVAQPGGAVNGQIRITEQGEIITSKYSNREVGRNNLEILTAATLEASLLQPRRSAPHHDYLEAMEQLSALAFKAYRGLVYETDGFVDYFWSSTVINEISTLNIGSRPASRKKTRAIEDLRAIPWVFSWAQCRLMLPGWYGFGSAVEAWVAEHPDKGTAFLQSMYQEWPFFRMLLSNMDMVLSKSSIAIASRYADLVPDEELRHKIFGRIRIEWHASVDSLLAIMGHERLLQGNPLLERSIRHRFPYLDPLNHVQVQLLREHRTHDPDEQVLRGIQLTINGISAGLRNSG.

Active-site residues include histidine 164 and lysine 595.

This sequence belongs to the PEPCase type 1 family. The cofactor is Mg(2+).

The catalysed reaction is oxaloacetate + phosphate = phosphoenolpyruvate + hydrogencarbonate. Forms oxaloacetate, a four-carbon dicarboxylic acid source for the tricarboxylic acid cycle. The protein is Phosphoenolpyruvate carboxylase of Rhodopseudomonas palustris (strain BisB5).